The chain runs to 247 residues: 1-(5-phosphoribosyl)-5-[(5-phosphoribosylamino)methylideneamino] imidazole-4-carboxamide isomerase (247 aa).

The active-site Proton acceptor is the aspartate 8. Aspartate 131 functions as the Proton donor in the catalytic mechanism.

The protein belongs to the HisA/HisF family.

Its subcellular location is the cytoplasm. It carries out the reaction 1-(5-phospho-beta-D-ribosyl)-5-[(5-phospho-beta-D-ribosylamino)methylideneamino]imidazole-4-carboxamide = 5-[(5-phospho-1-deoxy-D-ribulos-1-ylimino)methylamino]-1-(5-phospho-beta-D-ribosyl)imidazole-4-carboxamide. Its pathway is amino-acid biosynthesis; L-histidine biosynthesis; L-histidine from 5-phospho-alpha-D-ribose 1-diphosphate: step 4/9. The protein is 1-(5-phosphoribosyl)-5-[(5-phosphoribosylamino)methylideneamino] imidazole-4-carboxamide isomerase of Ralstonia pickettii (strain 12J).